Here is a 252-residue protein sequence, read N- to C-terminus: 5-oxoprolinase subunit A 1 (252 aa).

It belongs to the LamB/PxpA family. Forms a complex composed of PxpA, PxpB and PxpC.

The catalysed reaction is 5-oxo-L-proline + ATP + 2 H2O = L-glutamate + ADP + phosphate + H(+). Its function is as follows. Catalyzes the cleavage of 5-oxoproline to form L-glutamate coupled to the hydrolysis of ATP to ADP and inorganic phosphate. The polypeptide is 5-oxoprolinase subunit A 1 (Pseudomonas putida (strain ATCC 47054 / DSM 6125 / CFBP 8728 / NCIMB 11950 / KT2440)).